The chain runs to 152 residues: FMN reductase (NADH) RutF (152 aa).

It belongs to the non-flavoprotein flavin reductase family. RutF subfamily.

The catalysed reaction is FMNH2 + NAD(+) = FMN + NADH + 2 H(+). In terms of biological role, catalyzes the reduction of FMN to FMNH2 which is used to reduce pyrimidine by RutA via the Rut pathway. This Shigella dysenteriae serotype 1 (strain Sd197) protein is FMN reductase (NADH) RutF.